The chain runs to 325 residues: MKLMNKIIVPVTASALLLGACGSNATESKDNTLISSKAGDVKVADVMKKMGKEQIANTSFSIVLNKVLADKYKDKVDTKDIDKDIKKEEKQYGGKDQFESMLKQQGMSLDDYKEQKKLSAYQKQLLLDKVNVSDKEIKENSKKTSHILIKVKSKSSDKEGLSDKKAKEKAEKIQKEVEKNPNKFGEIAKKESMDSSSAKKDGSLGYVIKGQMVDSFEKALFKLKEGEVSKVVKTDYGYHIIKADKETDFNSEKSNIKQKLIEEKVQKKPKLLTDAYKELLKEYKVDYKDRDIKKAIEDSILDPDKIKQQQQQQSQGGSGLTNSGS.

The N-terminal stretch at 1–20 (MKLMNKIIVPVTASALLLGA) is a signal peptide. A lipid anchor (N-palmitoyl cysteine) is attached at cysteine 21. The S-diacylglycerol cysteine moiety is linked to residue cysteine 21. Residues 139–245 (ENSKKTSHIL…YGYHIIKADK (107 aa)) enclose the PpiC domain. Disordered regions lie at residues 159-200 (EGLS…SAKK) and 303-325 (PDKI…NSGS).

Belongs to the PrsA family.

It is found in the cell membrane. The catalysed reaction is [protein]-peptidylproline (omega=180) = [protein]-peptidylproline (omega=0). Its function is as follows. Plays a major role in protein secretion by helping the post-translocational extracellular folding of several secreted proteins. The polypeptide is Foldase protein PrsA (Staphylococcus epidermidis (strain ATCC 35984 / DSM 28319 / BCRC 17069 / CCUG 31568 / BM 3577 / RP62A)).